A 984-amino-acid polypeptide reads, in one-letter code: Mineralocorticoid receptor (984 aa).

Residues 1 to 602 (METKGYHSLP…STGSSRPSKI (602 aa)) are modulating. Over residues 231–243 (QGTPLTCSPNVEN) the composition is skewed to polar residues. Disordered regions lie at residues 231-329 (QGTP…AAST) and 346-369 (SGTS…EKGA). 5 positions are modified to phosphoserine: Ser-250, Ser-259, Ser-283, Ser-287, and Ser-299. Low complexity predominate over residues 259 to 291 (SPLSSPLSSMKSSISSPPSHCSVKSPVSSPNNV). Residues 292–329 (TLRSSVSSPANINNSRCSVSSPSNTNNRSTLSSPAAST) show a composition bias toward polar residues. Low complexity predominate over residues 346 to 355 (SGTSAGSSTS). Residues Cys-603, Cys-606, Cys-620, Cys-623, Cys-639, Cys-645, Cys-655, and Cys-658 each contribute to the Zn(2+) site. NR C4-type zinc fingers lie at residues 603-623 (CLVC…CGSC) and 639-663 (CAGR…LQKC). A DNA-binding region (nuclear receptor) is located at residues 603 to 668 (CLVCGDEASG…RLQKCLQAGM (66 aa)). Positions 669–725 (NLGARKSKKLGKLKGIHEEQPQQQQPPPPPPPPQSPEEGTTYIAPAKEPSVNTALVP) are hinge. Residues 684-710 (IHEEQPQQQQPPPPPPPPQSPEEGTTY) are disordered. Residues 692 to 703 (QQPPPPPPPPQS) show a composition bias toward pro residues. The 239-residue stretch at 726–964 (QLSTISRALT…EFPAMLVEII (239 aa)) folds into the NR LBD domain. 21-hydroxyprogesterone is bound by residues Asn-770 and Gln-776. 2 residues coordinate aldosterone: Asn-770 and Gln-776. Progesterone-binding residues include Asn-770 and Gln-776. The important for coactivator binding stretch occupies residues 782-785 (KWAK). 2 residues coordinate 21-hydroxyprogesterone: Arg-817 and Thr-945. 2 residues coordinate aldosterone: Arg-817 and Thr-945. Progesterone is bound by residues Arg-817 and Thr-945.

This sequence belongs to the nuclear hormone receptor family. NR3 subfamily. In terms of assembly, heteromultimeric cytoplasmic complex with HSP90, HSP70, and FKBP4, in the absence of ligand. After ligand binding, it translocates to the nucleus and binds to DNA as a homodimer and as a heterodimer with NR3C1. Binds the coactivator NCOA2. May interact with HSD11B2 in the absence of ligand. Binds the coactivators NCOA1, TIF1 and NRIP1. Phosphorylated.

It localises to the cytoplasm. Its subcellular location is the nucleus. The protein localises to the endoplasmic reticulum membrane. Its function is as follows. Receptor for both mineralocorticoids (MC) such as aldosterone and glucocorticoids (GC) such as corticosterone or cortisol. Binds to mineralocorticoid response elements (MRE) and transactivates target genes. The effect of MC is to increase ion and water transport and thus raise extracellular fluid volume and blood pressure and lower potassium levels. The chain is Mineralocorticoid receptor (NR3C2) from Aotus nancymaae (Ma's night monkey).